Reading from the N-terminus, the 137-residue chain is Large ribosomal subunit protein uL16 (137 aa).

This sequence belongs to the universal ribosomal protein uL16 family. In terms of assembly, part of the 50S ribosomal subunit.

Functionally, binds 23S rRNA and is also seen to make contacts with the A and possibly P site tRNAs. The chain is Large ribosomal subunit protein uL16 from Methylococcus capsulatus (strain ATCC 33009 / NCIMB 11132 / Bath).